A 164-amino-acid polypeptide reads, in one-letter code: MKEFLAVGEIINTHGIKGEVKVYPLTDDMKRFKKLKEVFIDGEERKILSCKLQPNNVVLKIEGIDSIEEANKYRKKLLEIKRENSVKLPKGSYFIADLIECRVIDEDGREIGQISDVIKTGSNDVYEVKGKSEVLVPAIKDIVTNIDIENKTVTIKPLEIWQCE.

Residues 90-161 enclose the PRC barrel domain; sequence KGSYFIADLI…TVTIKPLEIW (72 aa).

The protein belongs to the RimM family. In terms of assembly, binds ribosomal protein uS19.

Its subcellular location is the cytoplasm. Its function is as follows. An accessory protein needed during the final step in the assembly of 30S ribosomal subunit, possibly for assembly of the head region. Essential for efficient processing of 16S rRNA. May be needed both before and after RbfA during the maturation of 16S rRNA. It has affinity for free ribosomal 30S subunits but not for 70S ribosomes. This Clostridium botulinum (strain Hall / ATCC 3502 / NCTC 13319 / Type A) protein is Ribosome maturation factor RimM.